A 306-amino-acid polypeptide reads, in one-letter code: Pre-mRNA-splicing factor cwf26 (306 aa).

The interval 130-152 (KAEERRKREEKSSNLDEEELRKS) is disordered. A coiled-coil region spans residues 130 to 198 (KAEERRKREE…KEQQQGVVQV (69 aa)).

This sequence belongs to the CWC26 family. Belongs to the 40S cdc5-associated complex (or cwf complex), a spliceosome sub-complex reminiscent of a late-stage spliceosome composed of the U2, U5 and U6 snRNAs and at least brr2, cdc5, cwf2/prp3, cwf3/syf1, cwf4/syf3, cwf5/ecm2, spp42/cwf6, cwf7/spf27, cwf8, cwf9, cwf10, cwf11, cwf12, prp45/cwf13, cwf14, cwf15, cwf16, cwf17, cwf18, cwf19, cwf20, cwf21, cwf22, cwf23, cwf24, cwf25, cwf26, cyp7/cwf27, cwf28, cwf29/ist3, lea1, msl1, prp5/cwf1, prp10, prp12/sap130, prp17, prp22, sap61, sap62, sap114, sap145, slu7, smb1, smd1, smd3, smf1, smg1 and syf2.

Its subcellular location is the cytoplasm. It localises to the nucleus. Its function is as follows. Involved in mRNA splicing. This is Pre-mRNA-splicing factor cwf26 (cwf26) from Schizosaccharomyces pombe (strain 972 / ATCC 24843) (Fission yeast).